The primary structure comprises 165 residues: Transcription factor TCP16 (165 aa).

Polar residues predominate over residues 1–11 (MDSKNGINNSQ). Disordered stretches follow at residues 1–21 (MDSKNGINNSQKARRTPKDRH) and 146–165 (GNATASDTTSAATTTATTTV). Residues 12-21 (KARRTPKDRH) show a composition bias toward basic residues. Residues 17 to 71 (PKDRHLKIGGRDRRIRIPPSVAPQLFRLTKELGFKTDGETVSWLLQNAEPAIFAA) enclose the TCP domain. Low complexity predominate over residues 148-165 (ATASDTTSAATTTATTTV).

Mostly in anther in young buds.

The protein resides in the nucleus. Its function is as follows. Required during early processes in pollen development. The protein is Transcription factor TCP16 (TCP16) of Arabidopsis thaliana (Mouse-ear cress).